We begin with the raw amino-acid sequence, 129 residues long: uncharacterized protein (129 aa).

Residues 86–96 (NDGFSSDDEPE) are compositionally biased toward acidic residues. The segment at 86–129 (NDGFSSDDEPEEHVILTEDNQGEPSETPQATFDITEFIKTEDED) is disordered. Positions 103 to 117 (EDNQGEPSETPQATF) are enriched in polar residues.

This sequence belongs to the asfivirus D129L family.

This is an uncharacterized protein from African swine fever virus (isolate Tick/South Africa/Pretoriuskop Pr4/1996) (ASFV).